The following is a 280-amino-acid chain: Manganese transport system membrane protein MntC (280 aa).

The next 9 membrane-spanning stretches (helical) occupy residues 16 to 36 (ALIT…FIIL), 41 to 61 (LMGD…YMMG), 62 to 82 (MNFF…IGFV), 92 to 112 (TAIG…ISFA), 137 to 157 (TIII…EFLV), 168 to 188 (YGLN…LVTV), 193 to 213 (TVGI…AYLL), 221 to 241 (IMLA…FSYI), and 244 to 264 (LASG…AFLF).

It belongs to the ABC-3 integral membrane protein family.

It is found in the cell membrane. Functionally, this protein is probably a component of a manganese permease, a binding protein-dependent, ATP-driven transport system. The polypeptide is Manganese transport system membrane protein MntC (mntC) (Listeria innocua serovar 6a (strain ATCC BAA-680 / CLIP 11262)).